Here is a 629-residue protein sequence, read N- to C-terminus: Protein SPT2 homolog (629 aa).

An important for interaction with DNA region spans residues M1–S522. The stretch at Q45–K72 forms a coiled coil. A compositionally biased stretch (basic and acidic residues) spans V53–F93. Disordered regions lie at residues V53–S181, K206–Y533, and E608–K629. Over residues K111–K123 the composition is skewed to polar residues. Residues G127–S144 show a composition bias toward acidic residues. Residues V203–K228 adopt a coiled-coil conformation. Basic and acidic residues-rich tracts occupy residues K206 to R247 and K257 to Q277. Composition is skewed to polar residues over residues S278–S297, S305–A327, S335–D345, V353–G364, S387–P398, N437–S450, and S462–I490. An important for interaction with histones region spans residues G523–K629. Residues W591–K629 are a coiled coil.

This sequence belongs to the SPT2 family. Interacts with histones. Interacts with a heterotetrameric complex formed by histone H3 and H4, especially when the histone tetramer is not bound to DNA.

Its subcellular location is the nucleus. It localises to the nucleolus. Histone chaperone that stabilizes pre-existing histone tetramers and regulates replication-independent histone exchange on chromatin. Required for normal chromatin refolding in the coding region of transcribed genes, and for the suppression of spurious transcription. Binds DNA and histones and promotes nucleosome assembly (in vitro). Facilitates formation of tetrameric histone complexes containing histone H3 and H4. Modulates RNA polymerase 1-mediated transcription. Binds DNA, with a preference for branched DNA species, such as Y-form DNA and Holliday junction DNA. The protein is Protein SPT2 homolog (spty2d1) of Danio rerio (Zebrafish).